Consider the following 628-residue polypeptide: Phomenoic acid biosynthesis cluster MFS-type transporter (628 aa).

14 consecutive transmembrane segments (helical) span residues 102–122 (IHGF…FLYA), 150–170 (VGFV…YGIL), 174–194 (WLYI…GAAP), 204–224 (VFAG…LSIN), 232–252 (AYLS…PVIG), 262–282 (WAFY…FFLL), 302–322 (FVGA…INFG), 329–349 (NSGT…AFAV), 375–395 (MLLF…IYFI), 407–427 (ALDS…TILV), 435–455 (FGYY…ANVF), 488–508 (GFEA…YAVI), 524–544 (IMIA…AVFI), and 595–615 (AKAF…SLGF).

This sequence belongs to the major facilitator superfamily. TCR/Tet family.

It localises to the cell membrane. In terms of biological role, MFS-type transporter; part of the gene cluster that mediates the biosynthesis of phomenoic acid, a long chain aliphatic carboxylic acid that does not appear to be essential for pathogenicity but may play a role in allowing to outcompete other fungi in the environmental niche via its antifungal properties. Is probably involved in the efflux of phomenoic acid. The protein is Phomenoic acid biosynthesis cluster MFS-type transporter of Leptosphaeria maculans (strain JN3 / isolate v23.1.3 / race Av1-4-5-6-7-8) (Blackleg fungus).